A 463-amino-acid polypeptide reads, in one-letter code: L-seryl-tRNA(Sec) selenium transferase (463 aa).

At lysine 295 the chain carries N6-(pyridoxal phosphate)lysine.

It belongs to the SelA family. In terms of assembly, homodecamer; pentamer of dimers. Binds only one seryl-tRNA(Sec) per dimer. The cofactor is pyridoxal 5'-phosphate.

Its subcellular location is the cytoplasm. The enzyme catalyses L-seryl-tRNA(Sec) + selenophosphate + H(+) = L-selenocysteinyl-tRNA(Sec) + phosphate. It participates in aminoacyl-tRNA biosynthesis; selenocysteinyl-tRNA(Sec) biosynthesis; selenocysteinyl-tRNA(Sec) from L-seryl-tRNA(Sec) (bacterial route): step 1/1. Its function is as follows. Converts seryl-tRNA(Sec) to selenocysteinyl-tRNA(Sec) required for selenoprotein biosynthesis. This is L-seryl-tRNA(Sec) selenium transferase from Edwardsiella ictaluri (strain 93-146).